Consider the following 767-residue polypeptide: MQTFRLTSTGRNILRPDELAFQPREEIPYKSFHPDLQIDEPLEILEGDHTQYAGLRDSLVTYKSENSYVLKALLNAKIENVKPVGVQTENINPQEKKFGYKTAKQLDWSPDEYFKFVAIHPYSKTSFPVSYDLDELDTMWLTYYNEFQLSSNSEWENVSKEFLEIVLTIIEREWLYLEAWMPKIEPVRVEDELDGRCVICNEAECENSNAIVFCDNCNTSVHQNCYGIPFVPEGQWFCKKCLLAPHEVICCAFCPDRDGAFCTTLDGRWCHTICAIAIPEISFHDTSRLDLVRNIASIPKSRWKLVCCICKLRWGTCVQCSDKNCYAAYHITCARRAGFFYKIYSHSASYDSVDMETYCDKHTPPDYLNGLMKRLFPLAELYYKRMATDVPLNFQATKAPDFVPEGPWKSHPLPAFIVDKVTKVLLSYNVKRQDLPSIVTDICKFYHMKRRSRKDAPLLKSQLLMDSLENLPVRASKDRVRSLEVAKALQDQYQSLLTLVESTAKRQLLKCQLSNLRKKFLNLNYFPAQRLLQDTLVKIIDLDVDGLFNMPLDNGWIGWVELKRQVFSYQIGSISSLEKKLEPIWDVDGVIQCIDDMEQLTAMVQFAQKTEGEVKKLFIKAKIYFESLSLDERGNLKVPSLGINGLEYDNWPGLNELEMSQLDIPSQGNLKSLHDFIEGLDLNEKIGKFPISMFQNQVAQFSTIEIPKMSGRANGMHNFHSEDVTGQSNHALPNSVTKKNGTKQPYTKNSLPFNERITRSKAKKNYS.

Residues 194–244 form a PHD-type 1 zinc finger; that stretch reads DGRCVICNEAECENSNAIVFCDNCNTSVHQNCYGIPFVPEGQWFCKKCLLA. The C2HC pre-PHD-type zinc finger occupies 248–281; the sequence is VICCAFCPDRDGAFCTTLDGRWCHTICAIAIPEI. The segment at 305 to 363 adopts a PHD-type 2 zinc-finger fold; that stretch reads LVCCICKLRWGTCVQCSDKNCYAAYHITCARRAGFFYKIYSHSASYDSVDMETYCDKHT. A compositionally biased stretch (polar residues) spans 724-752; sequence VTGQSNHALPNSVTKKNGTKQPYTKNSLP. Positions 724–767 are disordered; sequence VTGQSNHALPNSVTKKNGTKQPYTKNSLPFNERITRSKAKKNYS.

In terms of assembly, component of the mst2 complex composed of at least eaf6, mst2, nto1, pdp3, ptf1, ptf2 and tfg3.

The protein resides in the cytoplasm. Its subcellular location is the nucleus. Functionally, component of the mst2 complex which is a highly specific H3 lysine 14 (H3K14) acetyltransferase that functions together with gcn5 to regulate global levels of H3K14 acetylation (H3K14ac), critical for DNA damage checkpoint activation. The chain is Mst2 complex subunit nto1 (nto1) from Schizosaccharomyces pombe (strain 972 / ATCC 24843) (Fission yeast).